Here is a 307-residue protein sequence, read N- to C-terminus: Deaminated glutathione amidase, chloroplastic/cytosolic (307 aa).

The transit peptide at 1–36 (MNAYSVSLDFTKPSLFTRITLSSQIPLTMATTVNKT) directs the protein to the chloroplast. The CN hydrolase domain maps to 37 to 286 (VRVAAAQMTS…TGIVVADIDF (250 aa)). Glu-76 acts as the Proton acceptor in catalysis. The active-site Proton donor is Lys-147. Cys-188 (nucleophile) is an active-site residue.

Belongs to the nitrilase superfamily. NIT1/NIT2 family.

It localises to the plastid. It is found in the chloroplast. The protein resides in the cytoplasm. It catalyses the reaction N-(4-oxoglutaryl)-L-cysteinylglycine + H2O = L-cysteinylglycine + 2-oxoglutarate. The catalysed reaction is N-(4-carboxy-4-oxobutanoyl)-L-ethylglycylglycine + H2O = N-(2-aminobutanoyl)glycine + 2-oxoglutarate. Catalyzes the hydrolysis of the amide bond in N-(4-oxoglutarate)-L-cysteinylglycine (deaminated glutathione), a metabolite repair reaction to dispose of the harmful deaminated glutathione. Possesses amidase activity toward deaminated ophthalmate in vitro. The polypeptide is Deaminated glutathione amidase, chloroplastic/cytosolic (Arabidopsis thaliana (Mouse-ear cress)).